A 529-amino-acid chain; its full sequence is Peptide chain release factor 3 (529 aa).

The tr-type G domain occupies 11-280 (NKRRTFAIIS…GLVKWAPAPM (270 aa)). Residues 20–27 (SHPDAGKT), 88–92 (DTPGH), and 142–145 (NKLD) contribute to the GTP site.

It belongs to the TRAFAC class translation factor GTPase superfamily. Classic translation factor GTPase family. PrfC subfamily.

It localises to the cytoplasm. Increases the formation of ribosomal termination complexes and stimulates activities of RF-1 and RF-2. It binds guanine nucleotides and has strong preference for UGA stop codons. It may interact directly with the ribosome. The stimulation of RF-1 and RF-2 is significantly reduced by GTP and GDP, but not by GMP. The polypeptide is Peptide chain release factor 3 (Proteus mirabilis (strain HI4320)).